Consider the following 143-residue polypeptide: Large ribosomal subunit protein uL15 (143 aa).

Residues 1 to 13 (MIRKKKKVKKIRG) are compositionally biased toward basic residues. The disordered stretch occupies residues 1 to 39 (MIRKKKKVKKIRGSRTCGGGSHKKRRGAGNKGGRGMAGG). Residues 29-38 (GNKGGRGMAG) show a composition bias toward gly residues.

It belongs to the universal ribosomal protein uL15 family. In terms of assembly, part of the 50S ribosomal subunit.

Binds to the 23S rRNA. This is Large ribosomal subunit protein uL15 from Methanocaldococcus jannaschii (strain ATCC 43067 / DSM 2661 / JAL-1 / JCM 10045 / NBRC 100440) (Methanococcus jannaschii).